Consider the following 407-residue polypeptide: MGDKAGTRVFKKSSPNCKVTVYLGKRDFVDHLDQVDPVDGVILVDPEYLKDRKVFVTLTCAFRYGREDLDVLGLSFRKDLYISTFQAFPPIAEERKANSRLQERLLKKLGQQAHPFYFTIPQNLPCSVTLQPGPEDTGKACGVDFEIRAFCAKSIEEKIHKRNSVRLVIRKVQYAPEKPGPQPMVETTRSFLMSDRSLHLEASLDKELYYHGEPISVNVHVTNNSTKTVKRLKISVRQYADICLFSTAQYKCPVAQVEADDQVSSSSTFCKVYTLTPTLDKNREKRGLALDGKLKHEDTNLASSTIVKDVTNKEVLGILVSYRVKVKLVISRGGDVSVELPFVLMHPKPTELPISRPQSAVPDSDPPIDTNLIEFETNSFSQDDDFVFEDFARLRLKGMADDKDDDC.

This sequence belongs to the arrestin family.

It is found in the cytoplasm. This is Arrestin red cell isoform 1 from Oncorhynchus mykiss (Rainbow trout).